A 204-amino-acid polypeptide reads, in one-letter code: FMN-dependent NADH:quinone oxidoreductase (204 aa).

FMN is bound by residues serine 10, 15–17, and 139–142; these read SLS and TSGG.

Belongs to the azoreductase type 1 family. In terms of assembly, homodimer. It depends on FMN as a cofactor.

It catalyses the reaction 2 a quinone + NADH + H(+) = 2 a 1,4-benzosemiquinone + NAD(+). The catalysed reaction is N,N-dimethyl-1,4-phenylenediamine + anthranilate + 2 NAD(+) = 2-(4-dimethylaminophenyl)diazenylbenzoate + 2 NADH + 2 H(+). Its function is as follows. Quinone reductase that provides resistance to thiol-specific stress caused by electrophilic quinones. Functionally, also exhibits azoreductase activity. Catalyzes the reductive cleavage of the azo bond in aromatic azo compounds to the corresponding amines. In Rhizobium leguminosarum bv. trifolii (strain WSM2304), this protein is FMN-dependent NADH:quinone oxidoreductase.